The following is a 222-amino-acid chain: Probable GTP-binding protein EngB (222 aa).

The EngB-type G domain occupies 25–199 (AGVEVAFAGR…SQLLQNWFDT (175 aa)). Residues 33 to 40 (GRSNAGKS), 60 to 64 (GRTQH), 78 to 81 (DLPG), 145 to 148 (TKAD), and 178 to 180 (FSS) each bind GTP. Residues S40 and T62 each contribute to the Mg(2+) site.

The protein belongs to the TRAFAC class TrmE-Era-EngA-EngB-Septin-like GTPase superfamily. EngB GTPase family. Requires Mg(2+) as cofactor.

Functionally, necessary for normal cell division and for the maintenance of normal septation. The chain is Probable GTP-binding protein EngB from Nitrosomonas europaea (strain ATCC 19718 / CIP 103999 / KCTC 2705 / NBRC 14298).